We begin with the raw amino-acid sequence, 457 residues long: MLSAALRRRVLAPTHSALRTGFAAHVVRHYASFPEHQVIKMPALSPTMQAGNIGAWQKKPGDSIAPGDVLVEIETDKAQMDFEFQEEGVIAKILKDAGEKDIPVGSPIAVLVEEGTDISAFEKFSIEDAGGDAAKPAAPKKEEKSESKSESASAPEPTPEPQQYQSQGRLQTALDRLPNISASAKRLAREKGISIDGLKGTGKNGQITEEDVKKAISSPAASSAPSATYEDIPISGMRKTIANRLVESTQTNPHFYVTSSISVSKLLKLRQALNSSADGKYKLSVNDFLIKAIAVASRKVPQVNSSWRDGNIRQFNNVDVSVAVSTPTGLITPIVTGVEGRGLEAISSQVKSLAKKARDGKLKPEEYQGGTISISNMGMNPAVDHFTAVINPPQAAILAVGTTKKVAIPAENEAGVEFDDQITLTASFDHKVVDGAVGAEWLKELKQVLENPLELLL.

The transit peptide at 1-30 (MLSAALRRRVLAPTHSALRTGFAAHVVRHY) directs the protein to the mitochondrion. The region spanning 36-112 (HQVIKMPALS…PVGSPIAVLV (77 aa)) is the Lipoyl-binding domain. An N6-lipoyllysine modification is found at Lys77. Residues 129 to 168 (AGGDAAKPAAPKKEEKSESKSESASAPEPTPEPQQYQSQG) are disordered. The segment covering 139-149 (PKKEEKSESKS) has biased composition (basic and acidic residues). Lys148 is subject to N6-crotonyllysine. The Peripheral subunit-binding (PSBD) domain maps to 179-216 (NISASAKRLAREKGISIDGLKGTGKNGQITEEDVKKAI). Catalysis depends on residues His430 and Asp434.

Belongs to the 2-oxoacid dehydrogenase family. In terms of assembly, eukaryotic pyruvate dehydrogenase (PDH) complexes are organized as a core consisting of the oligomeric dihydrolipoamide acetyl-transferase (E2), around which are arranged multiple copies of pyruvate dehydrogenase (E1), dihydrolipoamide dehydrogenase (E3) and protein X (E3BP) bound by non-covalent bonds. Interacts with SIR5; the interaction is direct. (R)-lipoate is required as a cofactor. Post-translationally, decrotonylated at 'Lys-148' by SIR5, which inhibits the activity of the pyruvate dehydrogenase complex (PDC).

It localises to the mitochondrion matrix. The catalysed reaction is N(6)-[(R)-dihydrolipoyl]-L-lysyl-[protein] + acetyl-CoA = N(6)-[(R)-S(8)-acetyldihydrolipoyl]-L-lysyl-[protein] + CoA. In terms of biological role, the pyruvate dehydrogenase complex catalyzes the overall conversion of pyruvate to acetyl-CoA and CO(2). High pyruvate dehydrogenase complex activity is required for sufficient energy production during germination of conidia. This is Dihydrolipoyllysine-residue acetyltransferase component of pyruvate dehydrogenase complex, mitochondrial from Fusarium oxysporum f. sp. lycopersici (strain 4287 / CBS 123668 / FGSC 9935 / NRRL 34936) (Fusarium vascular wilt of tomato).